Reading from the N-terminus, the 1018-residue chain is Serine/threonine-protein kinase 31 (1018 aa).

The 60-residue stretch at 78–137 folds into the Tudor domain; the sequence is NLDPKKIYGGLFSEDKCWYRCKVLKTISDDKCLVRYIDYGNTEILNRSDIVEIPPELQFS. Residues 298–358 adopt a coiled-coil conformation; that stretch reads AKIKQDQKLI…TKHLESTLKT (61 aa). Residues 711–1018 enclose the Protein kinase domain; it reads IGLLKYMNSG…EKTRNGEANP (308 aa). Residues 717–725 and Lys738 each bind ATP; that span reads MNSGGLLTM. The segment at 988 to 1018 is disordered; that stretch reads IECTQHSREDESKMESLDRYSEKTRNGEANP.

It belongs to the protein kinase superfamily. Ser/Thr protein kinase family. Testis specific. Expressed only in male germ cells.

It carries out the reaction L-seryl-[protein] + ATP = O-phospho-L-seryl-[protein] + ADP + H(+). The catalysed reaction is L-threonyl-[protein] + ATP = O-phospho-L-threonyl-[protein] + ADP + H(+). This chain is Serine/threonine-protein kinase 31 (Stk31), found in Mus musculus (Mouse).